Consider the following 130-residue polypeptide: Small ribosomal subunit protein uS11 (130 aa).

Belongs to the universal ribosomal protein uS11 family. Part of the 30S ribosomal subunit. Interacts with proteins S7 and S18. Binds to IF-3.

Its function is as follows. Located on the platform of the 30S subunit, it bridges several disparate RNA helices of the 16S rRNA. Forms part of the Shine-Dalgarno cleft in the 70S ribosome. The protein is Small ribosomal subunit protein uS11 of Thermoanaerobacter sp. (strain X514).